Reading from the N-terminus, the 765-residue chain is Protein transport protein Sec23A (765 aa).

T2 is subject to N-acetylthreonine. 4 residues coordinate Zn(2+): C61, C66, C85, and C88. The residue at position 308 (T308) is a Phosphothreonine. Residues 632 to 718 (PEPVLLDSSS…EHGGSQARFL (87 aa)) form a Gelsolin-like repeat.

It belongs to the SEC23/SEC24 family. SEC23 subfamily. COPII is composed of at least five proteins: the Sec23/24 complex, the Sec13/31 complex and Sar1. Interacts with SEC23IP. Interacts with HTR4. Interacts with SEC16A. Interacts with SLC6A4. Interacts (as part of the Sec23/24 complex) with SEC22B; recruits SEC22B into COPII-coated vesicles and allows the transport of this cargo from the endoplasmic reticulum to the Golgi. Interacts (via Gelsolin-like repeat) with MIA2 and MIA3; specifically involved in the transport of large cargos like the collagen COL7A1. Interacts with DDHD1. Interacts with TMEM39A. Interacts with SACM1L; this interaction is reduced in the absence of TMEM39A. Interacts with kinase FAM20C; transport of FAM20C from the endoplasmic reticulum to the Golgi is likely to be mediated by COPII vesicles.

The protein resides in the cytoplasmic vesicle. It localises to the COPII-coated vesicle membrane. The protein localises to the endoplasmic reticulum membrane. It is found in the cytoplasm. Its subcellular location is the cytosol. Functionally, component of the coat protein complex II (COPII) which promotes the formation of transport vesicles from the endoplasmic reticulum (ER). The coat has two main functions, the physical deformation of the endoplasmic reticulum membrane into vesicles and the selection of cargo molecules for their transport to the Golgi complex. Required for the translocation of insulin-induced glucose transporter SLC2A4/GLUT4 to the cell membrane. This Pongo abelii (Sumatran orangutan) protein is Protein transport protein Sec23A.